A 135-amino-acid chain; its full sequence is Biglycan (135 aa).

LRR repeat units follow at residues 4–24 (KLNY…DLPE), 25–46 (TLNE…DLLR), 49–72 (KLYR…SFLP), 73–95 (TLRE…PDLK), and 96–117 (LLQV…DFCP). A glycan (N-linked (GlcNAc...) asparagine) is linked at asparagine 65. A glycan (N-linked (GlcNAc...) asparagine) is linked at asparagine 106.

Belongs to the small leucine-rich proteoglycan (SLRP) family. SLRP class I subfamily. In terms of assembly, homodimer. Forms a ternary complex with MFAP2 and ELN. Post-translationally, the two attached glycosaminoglycan chains can be either chondroitin sulfate or dermatan sulfate. In terms of tissue distribution, found in several connective tissues, especially in articular cartilages.

The protein resides in the secreted. The protein localises to the extracellular space. It localises to the extracellular matrix. In terms of biological role, may be involved in collagen fiber assembly. This is Biglycan (BGN) from Oryctolagus cuniculus (Rabbit).